We begin with the raw amino-acid sequence, 239 residues long: C-8 sterol isomerase erg2 (239 aa).

Residue Asn11 is glycosylated (N-linked (GlcNAc...) asparagine). A helical transmembrane segment spans residues 27–47; sequence KFGFLAVFVAIFAALYSYLDA. Residue Asn73 is glycosylated (N-linked (GlcNAc...) asparagine).

Belongs to the ERG2 family.

Its subcellular location is the endoplasmic reticulum membrane. The enzyme catalyses fecosterol = episterol. Its pathway is steroid metabolism; ergosterol biosynthesis. Its function is as follows. C-8 sterol isomerase; part of the third module of ergosterol biosynthesis pathway that includes the late steps of the pathway. Erg2 catalyzes the reaction which results in unsaturation at C-7 in the B ring of sterols and thus converts fecosterol to episterol. The third module or late pathway involves the ergosterol synthesis itself through consecutive reactions that mainly occur in the endoplasmic reticulum (ER) membrane. Firstly, the squalene synthase erg9 catalyzes the condensation of 2 farnesyl pyrophosphate moieties to form squalene, which is the precursor of all steroids. Squalene synthase is crucial for balancing the incorporation of farnesyl diphosphate (FPP) into sterol and nonsterol isoprene synthesis. Secondly, squalene is converted into lanosterol by the consecutive action of the squalene epoxidase erg1 and the lanosterol synthase erg7. Then, the delta(24)-sterol C-methyltransferase erg6 methylates lanosterol at C-24 to produce eburicol. Eburicol is the substrate of the sterol 14-alpha demethylase encoded by cyp51A and cyp51B, to yield 4,4,24-trimethyl ergosta-8,14,24(28)-trienol. The C-14 reductase erg24 then reduces the C14=C15 double bond which leads to 4,4-dimethylfecosterol. A sequence of further demethylations at C-4, involving the C-4 demethylation complex containing the C-4 methylsterol oxidases erg25A or erg25B, the sterol-4-alpha-carboxylate 3-dehydrogenase erg26 and the 3-keto-steroid reductase erg27, leads to the production of fecosterol via 4-methylfecosterol. The C-8 sterol isomerase erg2 then catalyzes the reaction which results in unsaturation at C-7 in the B ring of sterols and thus converts fecosterol to episterol. The sterol-C5-desaturase erg3B then catalyzes the introduction of a C-5 double bond in the B ring to produce 5-dehydroepisterol. The 2 other sterol-C5-desaturases, erg3A and erg3C, seem to be less important in ergosterol biosynthesis. The C-22 sterol desaturase erg5 further converts 5-dehydroepisterol into ergosta-5,7,22,24(28)-tetraen-3beta-ol by forming the C-22(23) double bond in the sterol side chain. Finally, ergosta-5,7,22,24(28)-tetraen-3beta-ol is substrate of the C-24(28) sterol reductases erg4A and erg4B to produce ergosterol. Possible alternative sterol biosynthetic pathways might exist from fecosterol to ergosterol, depending on the activities of the erg3 isoforms. The chain is C-8 sterol isomerase erg2 from Aspergillus fumigatus (strain ATCC MYA-4609 / CBS 101355 / FGSC A1100 / Af293) (Neosartorya fumigata).